Consider the following 161-residue polypeptide: Phosphopantetheine adenylyltransferase (161 aa).

Threonine 11 is a substrate binding site. ATP-binding positions include 11-12 and histidine 19; that span reads TF. The substrate site is built by lysine 43, threonine 75, and arginine 89. Residues 90 to 92, glutamate 100, and 125 to 131 each bind ATP; these read GLR and YSFLSSS.

It belongs to the bacterial CoaD family. Homohexamer. The cofactor is Mg(2+).

It localises to the cytoplasm. It carries out the reaction (R)-4'-phosphopantetheine + ATP + H(+) = 3'-dephospho-CoA + diphosphate. Its pathway is cofactor biosynthesis; coenzyme A biosynthesis; CoA from (R)-pantothenate: step 4/5. In terms of biological role, reversibly transfers an adenylyl group from ATP to 4'-phosphopantetheine, yielding dephospho-CoA (dPCoA) and pyrophosphate. This is Phosphopantetheine adenylyltransferase from Listeria innocua serovar 6a (strain ATCC BAA-680 / CLIP 11262).